Reading from the N-terminus, the 219-residue chain is MNKEKAIVVFSGGQDSTTCLFWAKKKYKEVIAVSFDYNQKHKLELECAKDICKKYNIEHKILDLNLLNQLAPNSLTRQDITVDKSAPKEGVPNSFVDGRNLLFLSFVAVFAKQRGINAIITGVSQSDFSGYPDCRDVFIKSLNVTLNLAMDYEFEILTPLMWINKAETWKMAYDLGVLDIVKEETLTCYNGIKADGCGECPACKLRKKGYLEFEKEYLK.

Residue 10-20 (FSGGQDSTTCL) coordinates ATP. Positions 188, 197, 200, and 203 each coordinate Zn(2+).

Belongs to the QueC family. As to quaternary structure, homodimer. Zn(2+) serves as cofactor.

It catalyses the reaction 7-carboxy-7-deazaguanine + NH4(+) + ATP = 7-cyano-7-deazaguanine + ADP + phosphate + H2O + H(+). Its pathway is purine metabolism; 7-cyano-7-deazaguanine biosynthesis. Its function is as follows. Catalyzes the ATP-dependent conversion of 7-carboxy-7-deazaguanine (CDG) to 7-cyano-7-deazaguanine (preQ(0)). The polypeptide is 7-cyano-7-deazaguanine synthase (Clostridium botulinum (strain 657 / Type Ba4)).